An 85-amino-acid polypeptide reads, in one-letter code: U4-theraphotoxin-Hhn1j (85 aa).

Residues 1–22 (MKVTLIAILTCAAVLVLHTTAA) form the signal peptide. Positions 23–48 (EELEAESQLMEVGMPDTELAAVDEER) are excised as a propeptide. Cystine bridges form between Cys52-Cys66, Cys56-Cys77, and Cys71-Cys82.

Belongs to the neurotoxin 12 (Hwtx-2) family. 02 (Hwtx-2) subfamily. As to expression, expressed by the venom gland.

The protein resides in the secreted. Postsynaptic neurotoxin. The sequence is that of U4-theraphotoxin-Hhn1j from Cyriopagopus hainanus (Chinese bird spider).